The chain runs to 540 residues: BTB/POZ domain-containing protein 6-A (540 aa).

Positions 138-208 (ADVHFIVGPP…MYSDEIELAP (71 aa)) constitute a BTB domain.

As to quaternary structure, interacts with cul3. Interacts (via BTB domain) with zbtb16/plzf. Expressed in the developing central nervous system.

It localises to the cytoplasm. The protein localises to the nucleus. In terms of biological role, adapter protein for the cul3 E3 ubiquitin-protein ligase complex. Promotes the export of zbtb16/plzf from the nucleus to the cytoplasm and targets zbtb16/plzf for ubiquitination and degradation. Up-regulates neurog1 expression and antagonizes zbtb16/plzf, to promote neurogenesis. The chain is BTB/POZ domain-containing protein 6-A (btbd6a) from Danio rerio (Zebrafish).